Here is a 38-residue protein sequence, read N- to C-terminus: Putative ORF10 protein (38 aa).

In terms of assembly, binds host ZYG11B. This would not play any role in SARS-CoV-2 infection.

This Severe acute respiratory syndrome coronavirus 2 (2019-nCoV) protein is Putative ORF10 protein.